Reading from the N-terminus, the 938-residue chain is Translation initiation factor IF-2 (938 aa).

A disordered region spans residues 55–322 (KAEASAAPAA…RKSKRARRQE (268 aa)). Low complexity-rich tracts occupy residues 57–68 (EASAAPAAPAEK) and 77–117 (KKAA…AAAP). Pro residues predominate over residues 118 to 136 (KPGPKPAPVAEQPAPPAEP). Composition is skewed to low complexity over residues 141–153 (APEA…APAA), 180–198 (GMGR…AGDN), and 224–233 (MMPKSPSAFG). Residues 247–293 (PGRGGAPGRGGAPGRGGVGTGAPGRGGAPGGGFGPSGGGRPGGGRPG) show a composition bias toward gly residues. Over residues 310–319 (RRGRKSKRAR) the composition is skewed to basic residues. The tr-type G domain occupies 431 to 603 (ARPPVVTVMG…VVLTADASLD (173 aa)). The interval 440–447 (GHVDHGKT) is G1. 440-447 (GHVDHGKT) is a GTP binding site. The tract at residues 465–469 (GITQH) is G2. A G3 region spans residues 490–493 (DTPG). Residues 490 to 494 (DTPGH) and 544 to 547 (NKID) contribute to the GTP site. The segment at 544–547 (NKID) is G4. Residues 580-582 (SAK) form a G5 region.

It belongs to the TRAFAC class translation factor GTPase superfamily. Classic translation factor GTPase family. IF-2 subfamily.

Its subcellular location is the cytoplasm. Its function is as follows. One of the essential components for the initiation of protein synthesis. Protects formylmethionyl-tRNA from spontaneous hydrolysis and promotes its binding to the 30S ribosomal subunits. Also involved in the hydrolysis of GTP during the formation of the 70S ribosomal complex. The protein is Translation initiation factor IF-2 of Nocardioides sp. (strain ATCC BAA-499 / JS614).